The following is a 152-amino-acid chain: Ribosome maturation factor RimP (152 aa).

The protein belongs to the RimP family.

Its subcellular location is the cytoplasm. Its function is as follows. Required for maturation of 30S ribosomal subunits. This Porphyromonas gingivalis (strain ATCC 33277 / DSM 20709 / CIP 103683 / JCM 12257 / NCTC 11834 / 2561) protein is Ribosome maturation factor RimP.